A 276-amino-acid polypeptide reads, in one-letter code: Pantothenate synthetase (276 aa).

An ATP-binding site is contributed by 27–34 (MGALHKGH). The active-site Proton donor is His34. A (R)-pantoate-binding site is contributed by Gln58. Beta-alanine is bound at residue Gln58. 147–150 (GKKD) is a binding site for ATP. Residue Gln153 participates in (R)-pantoate binding. ATP is bound by residues Val176 and 184–187 (LSSR).

It belongs to the pantothenate synthetase family. Homodimer.

It is found in the cytoplasm. The catalysed reaction is (R)-pantoate + beta-alanine + ATP = (R)-pantothenate + AMP + diphosphate + H(+). The protein operates within cofactor biosynthesis; (R)-pantothenate biosynthesis; (R)-pantothenate from (R)-pantoate and beta-alanine: step 1/1. Its function is as follows. Catalyzes the condensation of pantoate with beta-alanine in an ATP-dependent reaction via a pantoyl-adenylate intermediate. This Helicobacter pylori (strain Shi470) protein is Pantothenate synthetase.